A 387-amino-acid polypeptide reads, in one-letter code: Carbamoyl phosphate synthase small chain (387 aa).

The interval 1 to 189 (MIKSAILVLE…GLPEDKQEQD (189 aa)) is CPSase. L-glutamine is bound by residues serine 47, glycine 241, and glycine 243. The Glutamine amidotransferase type-1 domain maps to 193-380 (HVVAYDFGAK…IELIEQYCQK (188 aa)). The Nucleophile role is filled by cysteine 269. Residues leucine 270, glutamine 273, asparagine 311, glycine 313, and phenylalanine 314 each contribute to the L-glutamine site. Residues histidine 353 and glutamate 355 contribute to the active site.

It belongs to the CarA family. Composed of two chains; the small (or glutamine) chain promotes the hydrolysis of glutamine to ammonia, which is used by the large (or ammonia) chain to synthesize carbamoyl phosphate. Tetramer of heterodimers (alpha,beta)4.

It catalyses the reaction hydrogencarbonate + L-glutamine + 2 ATP + H2O = carbamoyl phosphate + L-glutamate + 2 ADP + phosphate + 2 H(+). The enzyme catalyses L-glutamine + H2O = L-glutamate + NH4(+). The protein operates within amino-acid biosynthesis; L-arginine biosynthesis; carbamoyl phosphate from bicarbonate: step 1/1. Its pathway is pyrimidine metabolism; UMP biosynthesis via de novo pathway; (S)-dihydroorotate from bicarbonate: step 1/3. In terms of biological role, small subunit of the glutamine-dependent carbamoyl phosphate synthetase (CPSase). CPSase catalyzes the formation of carbamoyl phosphate from the ammonia moiety of glutamine, carbonate, and phosphate donated by ATP, constituting the first step of 2 biosynthetic pathways, one leading to arginine and/or urea and the other to pyrimidine nucleotides. The small subunit (glutamine amidotransferase) binds and cleaves glutamine to supply the large subunit with the substrate ammonia. The sequence is that of Carbamoyl phosphate synthase small chain from Photorhabdus laumondii subsp. laumondii (strain DSM 15139 / CIP 105565 / TT01) (Photorhabdus luminescens subsp. laumondii).